The sequence spans 1208 residues: DNA-directed RNA polymerase subunit beta (1208 aa).

It belongs to the RNA polymerase beta chain family. As to quaternary structure, the RNAP catalytic core consists of 2 alpha, 1 beta, 1 beta' and 1 omega subunit. When a sigma factor is associated with the core the holoenzyme is formed, which can initiate transcription.

The catalysed reaction is RNA(n) + a ribonucleoside 5'-triphosphate = RNA(n+1) + diphosphate. Its function is as follows. DNA-dependent RNA polymerase catalyzes the transcription of DNA into RNA using the four ribonucleoside triphosphates as substrates. In Enterococcus faecium (Streptococcus faecium), this protein is DNA-directed RNA polymerase subunit beta.